Here is a 151-residue protein sequence, read N- to C-terminus: Acidic phospholipase A2 4 (151 aa).

The signal sequence occupies residues 1–27; that stretch reads MYPAHLLVLLAVCVSLLGAASIPARPL. 7 cysteine pairs are disulfide-bonded: cysteine 38–cysteine 104, cysteine 54–cysteine 151, cysteine 56–cysteine 72, cysteine 71–cysteine 132, cysteine 78–cysteine 125, cysteine 88–cysteine 118, and cysteine 111–cysteine 123. Ca(2+) is bound by residues tyrosine 55, glycine 57, and glycine 59. Residue histidine 75 is part of the active site. Aspartate 76 contributes to the Ca(2+) binding site. Residue aspartate 126 is part of the active site.

This sequence belongs to the phospholipase A2 family. Group I subfamily. D49 sub-subfamily. It depends on Ca(2+) as a cofactor. As to expression, expressed by the venom gland.

The protein resides in the secreted. The enzyme catalyses a 1,2-diacyl-sn-glycero-3-phosphocholine + H2O = a 1-acyl-sn-glycero-3-phosphocholine + a fatty acid + H(+). Functionally, PLA2 catalyzes the calcium-dependent hydrolysis of the 2-acyl groups in 3-sn-phosphoglycerides. The polypeptide is Acidic phospholipase A2 4 (Tropidechis carinatus (Australian rough-scaled snake)).